The chain runs to 136 residues: Cell wall synthesis protein CwsA (136 aa).

The chain crosses the membrane as a helical span at residues 94–114 (LLIAAVAVTVLGGGAAAFSIV).

It belongs to the CwsA family. In terms of assembly, interacts with CrgA and Wag31.

It localises to the cell membrane. Functionally, required for regulated cell division, cell wall synthesis and the maintenance of cell shape. This Mycolicibacterium smegmatis (strain ATCC 700084 / mc(2)155) (Mycobacterium smegmatis) protein is Cell wall synthesis protein CwsA.